Consider the following 360-residue polypeptide: Phosphoserine aminotransferase (360 aa).

Arginine 41 contributes to the L-glutamate binding site. Tryptophan 101, threonine 152, aspartate 172, and glutamine 195 together coordinate pyridoxal 5'-phosphate. Lysine 196 is modified (N6-(pyridoxal phosphate)lysine). Pyridoxal 5'-phosphate is bound at residue 237 to 238; it reads NT.

It belongs to the class-V pyridoxal-phosphate-dependent aminotransferase family. SerC subfamily. As to quaternary structure, homodimer. Pyridoxal 5'-phosphate serves as cofactor.

It localises to the cytoplasm. The catalysed reaction is O-phospho-L-serine + 2-oxoglutarate = 3-phosphooxypyruvate + L-glutamate. It carries out the reaction 4-(phosphooxy)-L-threonine + 2-oxoglutarate = (R)-3-hydroxy-2-oxo-4-phosphooxybutanoate + L-glutamate. The protein operates within amino-acid biosynthesis; L-serine biosynthesis; L-serine from 3-phospho-D-glycerate: step 2/3. Its pathway is cofactor biosynthesis; pyridoxine 5'-phosphate biosynthesis; pyridoxine 5'-phosphate from D-erythrose 4-phosphate: step 3/5. Functionally, catalyzes the reversible conversion of 3-phosphohydroxypyruvate to phosphoserine and of 3-hydroxy-2-oxo-4-phosphonooxybutanoate to phosphohydroxythreonine. In Burkholderia orbicola (strain MC0-3), this protein is Phosphoserine aminotransferase.